The following is a 440-amino-acid chain: MSQETIFALASGAGRAAIAVIRISGPATRNTVTHLCGTLPPQRKSSLRRLRNRSGEILDQGIILWFAGPGSFTGEDCAELHLHGGNAVIEGMADALVDLGLRPAEAGEFTRRAFLNGKLDLTEAEAVADLIDAETSAQRRQALQQLDGGLSRQLETWTATLTRVLAWQETLIDFPDEDLPAEVDAALRTDLLLLRQEMAQALNEGAKAEKLREGLIFTILGKPNAGKSSLLNSLASRDAAIVSSQPGTTRDTIEVRLVLAGVPVTLIDTAGLRDSADSIEAEGVRRALARAESADLVLRTVDISTATEADFSAEQWPGSSEARSLMIGTKSDLPYTPPSSPDIVLVSTLTGDGMERLKTMLEAEARALTSHATGAPLTRARHRAALQDAIQHLEDAESARLEELRAEEIRLARQAVGRVTGQIGVEQILDHVFSSFCIGK.

Arg-22, Glu-79, and Lys-118 together coordinate (6S)-5-formyl-5,6,7,8-tetrahydrofolate. The 153-residue stretch at 214-366 folds into the TrmE-type G domain; sequence GLIFTILGKP…LKTMLEAEAR (153 aa). Residues 224–229, 243–249, and 268–271 contribute to the GTP site; these read NAGKSS, SSQPGTT, and DTAG. Mg(2+)-binding residues include Ser-228 and Thr-249. Residue Lys-440 coordinates (6S)-5-formyl-5,6,7,8-tetrahydrofolate.

The protein belongs to the TRAFAC class TrmE-Era-EngA-EngB-Septin-like GTPase superfamily. TrmE GTPase family. In terms of assembly, homodimer. Heterotetramer of two MnmE and two MnmG subunits. It depends on K(+) as a cofactor.

The protein resides in the cytoplasm. Exhibits a very high intrinsic GTPase hydrolysis rate. Involved in the addition of a carboxymethylaminomethyl (cmnm) group at the wobble position (U34) of certain tRNAs, forming tRNA-cmnm(5)s(2)U34. In Granulibacter bethesdensis (strain ATCC BAA-1260 / CGDNIH1), this protein is tRNA modification GTPase MnmE.